The sequence spans 84 residues: NAD(P)H-quinone oxidoreductase subunit O (84 aa).

It belongs to the complex I NdhO subunit family. As to quaternary structure, NDH-1 can be composed of about 15 different subunits; different subcomplexes with different compositions have been identified which probably have different functions.

It localises to the cellular thylakoid membrane. It carries out the reaction a plastoquinone + NADH + (n+1) H(+)(in) = a plastoquinol + NAD(+) + n H(+)(out). The catalysed reaction is a plastoquinone + NADPH + (n+1) H(+)(in) = a plastoquinol + NADP(+) + n H(+)(out). Its function is as follows. NDH-1 shuttles electrons from an unknown electron donor, via FMN and iron-sulfur (Fe-S) centers, to quinones in the respiratory and/or the photosynthetic chain. The immediate electron acceptor for the enzyme in this species is believed to be plastoquinone. Couples the redox reaction to proton translocation, and thus conserves the redox energy in a proton gradient. Cyanobacterial NDH-1 also plays a role in inorganic carbon-concentration. The chain is NAD(P)H-quinone oxidoreductase subunit O from Parasynechococcus marenigrum (strain WH8102).